A 134-amino-acid chain; its full sequence is Small ribosomal subunit protein uS11 (134 aa).

Belongs to the universal ribosomal protein uS11 family. Part of the 30S ribosomal subunit. Interacts with proteins S7 and S18. Binds to IF-3.

In terms of biological role, located on the platform of the 30S subunit, it bridges several disparate RNA helices of the 16S rRNA. Forms part of the Shine-Dalgarno cleft in the 70S ribosome. In Frankia casuarinae (strain DSM 45818 / CECT 9043 / HFP020203 / CcI3), this protein is Small ribosomal subunit protein uS11.